Consider the following 27-residue polypeptide: Cysteine-rich venom protein tropirin (27 aa).

This sequence belongs to the CRISP family. Post-translationally, contains 8 disulfide bonds. Expressed by the venom gland.

It localises to the secreted. Blocks contraction of smooth muscle elicited by high potassium-induced depolarization, but does not block caffeine-stimulated contraction. May target voltage-gated calcium channels on smooth muscle. The protein is Cysteine-rich venom protein tropirin of Tropidechis carinatus (Australian rough-scaled snake).